We begin with the raw amino-acid sequence, 85 residues long: Growth factor (85 aa).

The first 19 residues, 1–19 (MVPRDLVATLLCAMCIVQA), serve as a signal peptide directing secretion. One can recognise an EGF-like domain in the interval 33–77 (RIKLCNDDYKNYCLNNGTCFTVALNNVSLNPFCACHINYVGSRCQ). Cystine bridges form between cysteine 37/cysteine 51, cysteine 45/cysteine 65, and cysteine 67/cysteine 76. Asparagine 48 and asparagine 58 each carry an N-linked (GlcNAc...) asparagine; by host glycan.

The protein localises to the secreted. In terms of biological role, stimulates the growth of some tissues. This chain is Growth factor (MGF), found in Oryctolagus cuniculus (Rabbit).